A 115-amino-acid polypeptide reads, in one-letter code: uncharacterized protein (115 aa).

The MSP domain maps to 1–115; the sequence is MGVEISLDPP…ETVIKLSAAE (115 aa).

This is an uncharacterized protein from Caenorhabditis elegans.